The primary structure comprises 407 residues: MKKKQQQHPGGGTDPWPHGAPVGGAPPCLGSCKRRIPLLPFLRFSLRDYGFCMATLLVFCLGSLFYQLSGGPPRFLLDLRQYLGNSTYLDDHGPPPSKVLPFPSQVVYNRVGKCGSRTVVLLLRILSEKHGFNLVTSDIHNKTRLTKNEQMELIKNISTAEQPYLFTRHVHFLNFSRFGGDQPVYINIIRDPVSRFLSNYFFRRFGDWRGEQNHMIRTPSMRQEERYLDINECILENYPECSNPRLFYIIPYFCGQHPRCREPGEWALERAKLNVNENFLLVGILEELEDVLLLLERFLPHYFKGVLSIYKDPEHRKLGNMTVTVRKTVPSPEAVQILYQRMRYEYEFYHYVREQFHLLKRKLGLKSRVSGPPVRPQFFIPTPLETEEPIDDEEQDDEKWLEDIYKR.

Residues 1–20 are disordered; sequence MKKKQQQHPGGGTDPWPHGA. Topologically, residues 1 to 49 are cytoplasmic; the sequence is MKKKQQQHPGGGTDPWPHGAPVGGAPPCLGSCKRRIPLLPFLRFSLRDY. A helical; Signal-anchor for type II membrane protein transmembrane segment spans residues 50–70; it reads GFCMATLLVFCLGSLFYQLSG. The Lumenal portion of the chain corresponds to 71–407; the sequence is GPPRFLLDLR…EKWLEDIYKR (337 aa). 3 N-linked (GlcNAc...) asparagine glycosylation sites follow: Asn-85, Asn-141, and Asn-156. The active site involves His-169. Residues Asn-174 and Asn-320 are each glycosylated (N-linked (GlcNAc...) asparagine). The segment covering 386–400 has biased composition (acidic residues); the sequence is TEEPIDDEEQDDEKW. A disordered region spans residues 386-407; it reads TEEPIDDEEQDDEKWLEDIYKR.

Belongs to the sulfotransferase 3 family.

The protein resides in the golgi apparatus membrane. Functionally, sulfotransferase that catalyzes the transfer of sulfate to the position 2 of uronyl residues in glycosaminoglycan chains. Has mainly activity toward iduronyl residues in dermatan sulfate, and weaker activity toward glucuronyl residues of chondroitin sulfate. Has no activity toward desulfated N-resulfated heparin. The sequence is that of Uronyl 2-sulfotransferase from Mus musculus (Mouse).